Reading from the N-terminus, the 827-residue chain is NT-3 growth factor receptor (827 aa).

The signal sequence occupies residues 1–31; the sequence is MDVSLCPTKCTFWRVFLLWSIWGDYLLSVLA. Cystine bridges form between Cys-32-Cys-38 and Cys-36-Cys-45. The Extracellular segment spans residues 32 to 430; sequence CPANCLCSKT…ITVTHKPEED (399 aa). Asn-68, Asn-72, and Asn-79 each carry an N-linked (GlcNAc...) asparagine glycan. 2 LRR repeats span residues 104 to 125 and 128 to 149; these read GLQRLTIRNSGLRNIQPRAFAK and HLRYIDLSGNRLTTLSWQLFQT. One can recognise an LRRCT domain in the interval 160 to 209; that stretch reads NPFNCSCDIRWIQLWQEKGEANLQSQQLHCMNLDTAVILLRNMNITQCDL. The N-linked (GlcNAc...) asparagine glycan is linked to Asn-163. Cystine bridges form between Cys-164-Cys-189 and Cys-166-Cys-207. N-linked (GlcNAc...) asparagine glycans are attached at residues Asn-203, Asn-218, Asn-232, Asn-259, Asn-267, Asn-272, and Asn-294. Ig-like C2-type domains follow at residues 210–300 and 319–382; these read PEIS…VLLT and HCIA…VATN. Cys-231 and Cys-284 are disulfide-bonded. A disulfide bridge links Cys-320 with Cys-362. 2 N-linked (GlcNAc...) asparagine glycosylation sites follow: Asn-375 and Asn-388. The helical transmembrane segment at 431-455 threads the bilayer; sequence TFGVSIAVGLAAFACVLLVVLFIMI. Over 456–827 the chain is Cytoplasmic; the sequence is NKYGRRSKFG…ATPIYLDILG (372 aa). A Phosphotyrosine; by autocatalysis modification is found at Tyr-518. One can recognise a Protein kinase domain in the interval 540–812; the sequence is IVLKRELGEG…LNIKEIYKIL (273 aa). Residues 546 to 554 and Lys-574 contribute to the ATP site; that span reads LGEGAFGKV. Asp-681 (proton acceptor) is an active-site residue. Phosphotyrosine; by autocatalysis occurs at positions 707, 711, 712, and 822.

This sequence belongs to the protein kinase superfamily. Tyr protein kinase family. Insulin receptor subfamily. As to quaternary structure, exists in a dynamic equilibrium between monomeric (low affinity) and dimeric (high affinity) structures. Interacts with PTPRS. Post-translationally, ligand-mediated auto-phosphorylation.

It localises to the membrane. It catalyses the reaction L-tyrosyl-[protein] + ATP = O-phospho-L-tyrosyl-[protein] + ADP + H(+). Functionally, receptor tyrosine kinase involved in nervous system and probably heart development. Upon binding of its ligand NTF3/neurotrophin-3, NTRK3 autophosphorylates and activates different signaling pathways, including the phosphatidylinositol 3-kinase/AKT and the MAPK pathways, that control cell survival and differentiation. The KT and KD isoforms fail to stimulate transformation, process outgrowth or survival. Isoform KI25 exhibits tyrosine phosphorylation in the absence of ligand and is unable to mediate survival of neuronal cells. The chain is NT-3 growth factor receptor (NTRK3) from Gallus gallus (Chicken).